The following is a 251-amino-acid chain: Triosephosphate isomerase (251 aa).

Asn9–Lys11 lines the substrate pocket. Catalysis depends on His95, which acts as the Electrophile. Glu167 (proton acceptor) is an active-site residue. Residues Gly173, Ser213, and Gly234 to Gly235 each bind substrate. Ser213 is subject to Phosphoserine.

It belongs to the triosephosphate isomerase family. As to quaternary structure, homodimer.

It is found in the cytoplasm. The enzyme catalyses D-glyceraldehyde 3-phosphate = dihydroxyacetone phosphate. The protein operates within carbohydrate biosynthesis; gluconeogenesis. It participates in carbohydrate degradation; glycolysis; D-glyceraldehyde 3-phosphate from glycerone phosphate: step 1/1. In terms of biological role, involved in the gluconeogenesis. Catalyzes stereospecifically the conversion of dihydroxyacetone phosphate (DHAP) to D-glyceraldehyde-3-phosphate (G3P). The sequence is that of Triosephosphate isomerase from Halalkalibacterium halodurans (strain ATCC BAA-125 / DSM 18197 / FERM 7344 / JCM 9153 / C-125) (Bacillus halodurans).